The primary structure comprises 556 residues: Glucose-6-phosphate isomerase (556 aa).

Residue E360 is the Proton donor of the active site. Catalysis depends on residues H391 and K519.

The protein belongs to the GPI family.

The protein localises to the cytoplasm. The catalysed reaction is alpha-D-glucose 6-phosphate = beta-D-fructose 6-phosphate. Its pathway is carbohydrate biosynthesis; gluconeogenesis. It functions in the pathway carbohydrate degradation; glycolysis; D-glyceraldehyde 3-phosphate and glycerone phosphate from D-glucose: step 2/4. Functionally, catalyzes the reversible isomerization of glucose-6-phosphate to fructose-6-phosphate. In Acinetobacter baumannii (strain SDF), this protein is Glucose-6-phosphate isomerase.